Reading from the N-terminus, the 442-residue chain is Probable glycine dehydrogenase (decarboxylating) subunit 1 (442 aa).

This sequence belongs to the GcvP family. N-terminal subunit subfamily. In terms of assembly, the glycine cleavage system is composed of four proteins: P, T, L and H. In this organism, the P 'protein' is a heterodimer of two subunits.

It catalyses the reaction N(6)-[(R)-lipoyl]-L-lysyl-[glycine-cleavage complex H protein] + glycine + H(+) = N(6)-[(R)-S(8)-aminomethyldihydrolipoyl]-L-lysyl-[glycine-cleavage complex H protein] + CO2. Its function is as follows. The glycine cleavage system catalyzes the degradation of glycine. The P protein binds the alpha-amino group of glycine through its pyridoxal phosphate cofactor; CO(2) is released and the remaining methylamine moiety is then transferred to the lipoamide cofactor of the H protein. The protein is Probable glycine dehydrogenase (decarboxylating) subunit 1 of Phenylobacterium zucineum (strain HLK1).